Consider the following 280-residue polypeptide: Serine protease 33 (280 aa).

The signal sequence occupies residues 1–22 (MRGVSCLQVLLLLVLGAAGTQG). A Peptidase S1 domain is found at 37–279 (IVGGRDGRDG…YSPWIQARVS (243 aa)). Cysteines 62 and 78 form a disulfide. Active-site charge relay system residues include histidine 77 and aspartate 126. 3 cysteine pairs are disulfide-bonded: cysteine 160/cysteine 237, cysteine 193/cysteine 216, and cysteine 227/cysteine 255. The active-site Charge relay system is serine 231.

It belongs to the peptidase S1 family. As to expression, predominantly expressed in macrophages. Present in the spleen, small and large intestine, lung and brain (at protein level). Highly expressed in peripheral leukocytes, ovary, retina, spleen and stomach. Moderately expressed in thymus, uterus and platelets, as well as some brain tissues, such as thalamus and fetal brain.

The protein localises to the secreted. In terms of biological role, serine protease that has amidolytic activity, cleaving its substrates before Arg residues. In Homo sapiens (Human), this protein is Serine protease 33 (PRSS33).